Consider the following 392-residue polypeptide: S-adenosylmethionine synthase (392 aa).

His20 is an ATP binding site. A Mg(2+)-binding site is contributed by Asp22. Glu48 is a binding site for K(+). Glu61 and Gln106 together coordinate L-methionine. Positions 106-116 are flexible loop; that stretch reads QSRDIINAIEK. ATP contacts are provided by residues 171-173, Asp248, 254-255, Ala271, and Lys275; these read DSK and RK. Asp248 is a binding site for L-methionine. Lys279 contributes to the L-methionine binding site.

It belongs to the AdoMet synthase family. In terms of assembly, homotetramer; dimer of dimers. Mg(2+) is required as a cofactor. It depends on K(+) as a cofactor.

It is found in the cytoplasm. The enzyme catalyses L-methionine + ATP + H2O = S-adenosyl-L-methionine + phosphate + diphosphate. The protein operates within amino-acid biosynthesis; S-adenosyl-L-methionine biosynthesis; S-adenosyl-L-methionine from L-methionine: step 1/1. Functionally, catalyzes the formation of S-adenosylmethionine (AdoMet) from methionine and ATP. The overall synthetic reaction is composed of two sequential steps, AdoMet formation and the subsequent tripolyphosphate hydrolysis which occurs prior to release of AdoMet from the enzyme. The polypeptide is S-adenosylmethionine synthase (Borreliella afzelii (strain PKo) (Borrelia afzelii)).